The following is a 738-amino-acid chain: Eukaryotic translation initiation factor 3 subunit B (738 aa).

The tract at residues 1–120 (MCGCVGVISN…LFIQFKTAQM (120 aa)) is sufficient for interaction with HCR1 and TIF32. Positions 1–245 (MCGCVGVISN…GIQSWGGAQF (245 aa)) are sufficient for interaction with PIC8. In terms of domain architecture, RRM spans 59 to 146 (NFVVVDGAPI…HRLLVNKLSD (88 aa)). 4 WD repeats span residues 211 to 250 (PRKGFTSKYAKFSPKGTYLFSIHPQGIQSWGGAQFESISK), 322 to 360 (QKEMPWPLVKWSHDDKYCARQGPGALAIYETPSFQLLDK), 363 to 406 (VKID…QTAR), and 537 to 579 (VVDK…ENVR).

It belongs to the eIF-3 subunit B family. Component of the eukaryotic translation initiation factor 3 (eIF-3) complex.

It localises to the cytoplasm. Functionally, RNA-binding component of the eukaryotic translation initiation factor 3 (eIF-3) complex, which is involved in protein synthesis of a specialized repertoire of mRNAs and, together with other initiation factors, stimulates binding of mRNA and methionyl-tRNAi to the 40S ribosome. The eIF-3 complex specifically targets and initiates translation of a subset of mRNAs involved in cell proliferation. The polypeptide is Eukaryotic translation initiation factor 3 subunit B (Meyerozyma guilliermondii (strain ATCC 6260 / CBS 566 / DSM 6381 / JCM 1539 / NBRC 10279 / NRRL Y-324) (Yeast)).